The following is a 527-amino-acid chain: Metal transporter Nramp6 (527 aa).

12 helical membrane-spanning segments follow: residues Phe38–Phe58, Glu71–Ala91, Phe115–Gly135, Leu143–Leu163, Leu173–His193, Ile221–Leu241, Gly264–Val284, Leu321–Gly341, Cys364–Lys384, Leu385–Leu405, Thr427–Ile447, and Val458–Ile478.

It belongs to the NRAMP (TC 2.A.55) family. Expressed in the vascular bundles of shoots, cotyledons, young leaves, sepals and petals, at the top of the flower stem and in the style. Expressed in the peduncle of developing siliques as well as in the septum and the funiculi.

Its subcellular location is the endomembrane system. Functionally, probable intracellular cadmium (Cd) transporter that participates in the distribution or availability of Cd within the cell. The polypeptide is Metal transporter Nramp6 (NRAMP6) (Arabidopsis thaliana (Mouse-ear cress)).